The primary structure comprises 130 residues: Small ribosomal subunit protein uS9 (130 aa).

The disordered stretch occupies residues 105–130; it reads TRDSRMKERKKPGLKGARRAPQFSKR. Residues 111 to 130 are compositionally biased toward basic residues; sequence KERKKPGLKGARRAPQFSKR.

Belongs to the universal ribosomal protein uS9 family.

The sequence is that of Small ribosomal subunit protein uS9 from Listeria welshimeri serovar 6b (strain ATCC 35897 / DSM 20650 / CCUG 15529 / CIP 8149 / NCTC 11857 / SLCC 5334 / V8).